The sequence spans 344 residues: Glycerol-3-phosphate dehydrogenase [NAD(P)+] (344 aa).

NADPH contacts are provided by Ser11, Trp12, His32, Arg33, and Lys105. Sn-glycerol 3-phosphate-binding residues include Lys105, Gly135, and Ser137. Ala139 provides a ligand contact to NADPH. Sn-glycerol 3-phosphate-binding residues include Lys190, Asp243, Ser253, Arg254, and Asn255. Lys190 acts as the Proton acceptor in catalysis. Arg254 is a binding site for NADPH. NADPH-binding residues include Val278 and Glu280.

The protein belongs to the NAD-dependent glycerol-3-phosphate dehydrogenase family.

Its subcellular location is the cytoplasm. The enzyme catalyses sn-glycerol 3-phosphate + NAD(+) = dihydroxyacetone phosphate + NADH + H(+). It catalyses the reaction sn-glycerol 3-phosphate + NADP(+) = dihydroxyacetone phosphate + NADPH + H(+). It participates in membrane lipid metabolism; glycerophospholipid metabolism. In terms of biological role, catalyzes the reduction of the glycolytic intermediate dihydroxyacetone phosphate (DHAP) to sn-glycerol 3-phosphate (G3P), the key precursor for phospholipid synthesis. In Oceanobacillus iheyensis (strain DSM 14371 / CIP 107618 / JCM 11309 / KCTC 3954 / HTE831), this protein is Glycerol-3-phosphate dehydrogenase [NAD(P)+].